Here is a 136-residue protein sequence, read N- to C-terminus: ATP synthase epsilon chain (136 aa).

It belongs to the ATPase epsilon chain family. In terms of assembly, F-type ATPases have 2 components, CF(1) - the catalytic core - and CF(0) - the membrane proton channel. CF(1) has five subunits: alpha(3), beta(3), gamma(1), delta(1), epsilon(1). CF(0) has three main subunits: a, b and c.

It is found in the cell inner membrane. Produces ATP from ADP in the presence of a proton gradient across the membrane. The protein is ATP synthase epsilon chain of Persephonella marina (strain DSM 14350 / EX-H1).